A 212-amino-acid polypeptide reads, in one-letter code: Small ribosomal subunit protein eS6 (212 aa).

This sequence belongs to the eukaryotic ribosomal protein eS6 family.

In Metallosphaera sedula (strain ATCC 51363 / DSM 5348 / JCM 9185 / NBRC 15509 / TH2), this protein is Small ribosomal subunit protein eS6.